Reading from the N-terminus, the 138-residue chain is 16 kDa phloem protein 2 (138 aa).

Residues 1–108 form the C2 domain; that stretch reads MGMGMMEVHL…LAEGVRKGWS (108 aa). 5 residues coordinate Ca(2+): Asp20, Asp27, Asp78, Asp80, and Asp86.

Ca(2+) is required as a cofactor. In terms of tissue distribution, sieve elements of leaves, stems, roots and flowers.

Its function is as follows. Binds to both sense and antisense RNA. Interacts with mesophyll plasmodesmata to mediate its own cell-to-cell transport and potentiate RNA trafficking. This Cucurbita maxima (Pumpkin) protein is 16 kDa phloem protein 2 (PP16-2).